A 124-amino-acid polypeptide reads, in one-letter code: Ribonuclease pancreatic (124 aa).

Residues 1-21 (AESSAMKFQRQHMDSDGHPDT) are disordered. Residues lysine 7 and arginine 10 each contribute to the substrate site. The Proton acceptor role is filled by histidine 12. Cystine bridges form between cysteine 26–cysteine 84, cysteine 40–cysteine 95, cysteine 58–cysteine 110, and cysteine 65–cysteine 72. Substrate-binding positions include 41 to 45 (KPVNT), lysine 66, and arginine 85. Histidine 119 serves as the catalytic Proton donor.

Belongs to the pancreatic ribonuclease family. Monomer. Interacts with and forms tight 1:1 complexes with RNH1. Dimerization of two such complexes may occur. Interaction with RNH1 inhibits this protein. In terms of tissue distribution, pancreas.

The protein localises to the secreted. The catalysed reaction is an [RNA] containing cytidine + H2O = an [RNA]-3'-cytidine-3'-phosphate + a 5'-hydroxy-ribonucleotide-3'-[RNA].. It catalyses the reaction an [RNA] containing uridine + H2O = an [RNA]-3'-uridine-3'-phosphate + a 5'-hydroxy-ribonucleotide-3'-[RNA].. Functionally, endonuclease that catalyzes the cleavage of RNA on the 3' side of pyrimidine nucleotides. Acts on single-stranded and double-stranded RNA. The protein is Ribonuclease pancreatic (RNASE1) of Galea musteloides (Common yellow-toothed cavy).